A 503-amino-acid polypeptide reads, in one-letter code: Probable Xaa-Pro aminopeptidase TSTA_094700 (503 aa).

Mn(2+) contacts are provided by Asp277, Asp288, Glu428, and Glu467.

This sequence belongs to the peptidase M24B family. Mn(2+) serves as cofactor.

It catalyses the reaction Release of any N-terminal amino acid, including proline, that is linked to proline, even from a dipeptide or tripeptide.. In terms of biological role, catalyzes the removal of a penultimate prolyl residue from the N-termini of peptides. In Talaromyces stipitatus (strain ATCC 10500 / CBS 375.48 / QM 6759 / NRRL 1006) (Penicillium stipitatum), this protein is Probable Xaa-Pro aminopeptidase TSTA_094700.